The following is a 168-amino-acid chain: Photosystem I assembly protein Ycf3 (168 aa).

3 TPR repeats span residues 35–68, 72–105, and 120–153; these read AFAYYRDGMSAQSEGNYAEALQNYYEAMRLEIDP, SYILYNIGLIHTRNGEHTKALEYYFRALERNPFL, and GEQAIRQGDSEIAEAWFDQAAEYWKQALALTPGN.

This sequence belongs to the Ycf3 family.

It localises to the plastid. The protein resides in the chloroplast thylakoid membrane. Functionally, essential for the assembly of the photosystem I (PSI) complex. May act as a chaperone-like factor to guide the assembly of the PSI subunits. The chain is Photosystem I assembly protein Ycf3 from Morus indica (Mulberry).